Reading from the N-terminus, the 396-residue chain is Calsequestrin-1 (396 aa).

Residues 1-34 form the signal peptide; it reads MSATDRMGPRAVPGLRLALLLLLVLGTPKSGVQG. A Phosphotyrosine modification is found at Y43. S81 is subject to Phosphoserine. At T124 the chain carries Phosphothreonine. S216 bears the Phosphoserine mark. N-linked (GlcNAc...) asparagine glycosylation occurs at N350.

This sequence belongs to the calsequestrin family. As to quaternary structure, monomer; increases in response to a depletion of intracellular calcium. Homodimer. Homotetramer and homopolymer. Can form linear homooligomers. Ca(2+) ions promote oligomerization. Interacts (via C-terminal end and preferentially with the monomeric form) with STIM1; this interaction increases in response to a depletion of intracellular calcium, decreases both STIM1 aggregation and clustering, interaction of STIM1 with ORAI1 and store-operated Ca(2+) entry (SOCE) activity. Interacts with ASPH and TRDN. N-glycosylated. In terms of tissue distribution, expressed in myoblasts (at protein level).

The protein localises to the endoplasmic reticulum. Its subcellular location is the sarcoplasmic reticulum. It localises to the sarcoplasmic reticulum lumen. It is found in the sarcoplasmic reticulum membrane. The protein resides in the mitochondrion matrix. Its function is as follows. Calsequestrin is a high-capacity, moderate affinity, calcium-binding protein and thus acts as an internal calcium store in muscle. Calcium ions are bound by clusters of acidic residues at the protein surface, often at the interface between subunits. Can bind around 80 Ca(2+) ions. Regulates the release of lumenal Ca(2+) via the calcium release channel RYR1; this plays an important role in triggering muscle contraction. Negatively regulates store-operated Ca(2+) entry (SOCE) activity. This Homo sapiens (Human) protein is Calsequestrin-1 (CASQ1).